Consider the following 309-residue polypeptide: Taste receptor type 2 member 114 (309 aa).

At 1–7 (MLSTMEG) the chain is on the extracellular side. Residues 8-28 (VLLSVSTSEAVLGIVGNTFIA) form a helical membrane-spanning segment. The Cytoplasmic segment spans residues 29–43 (LVNCMDYNRNKKLSN). A helical membrane pass occupies residues 44 to 64 (IGFILTGLAISRICLVLILIT). The Extracellular portion of the chain corresponds to 65 to 87 (EAYIKIFYPQLLSPVNIIELISY). Residues 88-108 (LWIIICQLNVWFATSLSIFYF) form a helical membrane-spanning segment. At 109–127 (LKIANFSHYIFVWLKRRID) the chain is on the cytoplasmic side. The helical transmembrane segment at 128–148 (LVFFFLIGCLLISWLFSFPVV) threads the bilayer. The Extracellular segment spans residues 149 to 182 (AKMVKDNKMLYINTSWQIHMKKSELIINYVFTNG). Asn-161 carries N-linked (GlcNAc...) asparagine glycosylation. Residues 183-203 (GVFLFFMIMLIVCFLLIISLW) traverse the membrane as a helical segment. Over 204–233 (RHRRQMESNKLGFRDLNTEVHVRTIKVLLS) the chain is Cytoplasmic. A helical transmembrane segment spans residues 234–254 (FIILFILHFMGITINVICLLI). The Extracellular portion of the chain corresponds to 255 to 259 (PESNL). A helical membrane pass occupies residues 260-280 (LFMFGLTTAFIYPGCHSLILI). Residues 281–309 (LANSRLKQCSVMILQLLKCCENGKELRDT) are Cytoplasmic-facing.

This sequence belongs to the G-protein coupled receptor T2R family.

The protein localises to the membrane. Its function is as follows. Putative taste receptor which may play a role in the perception of bitterness. The polypeptide is Taste receptor type 2 member 114 (Mus musculus (Mouse)).